The sequence spans 125 residues: Protein ApaG (125 aa).

The region spanning 1–125 (MINSPRVCVQ…FRLAIPSLIN (125 aa)) is the ApaG domain.

The sequence is that of Protein ApaG from Sodalis glossinidius (strain morsitans).